We begin with the raw amino-acid sequence, 747 residues long: Threonine synthase-like 1 (747 aa).

K351 bears the N6-(pyridoxal phosphate)lysine mark.

This sequence belongs to the threonine synthase family. It depends on pyridoxal 5'-phosphate as a cofactor.

This Mus musculus (Mouse) protein is Threonine synthase-like 1 (Thnsl1).